A 363-amino-acid chain; its full sequence is NAD(P)H-quinone oxidoreductase subunit 1, chloroplastic (363 aa).

Helical transmembrane passes span 27–47 (IWLF…VLVI), 98–118 (FSIG…VIPF), 127–147 (LSIG…GLLM), 248–268 (YSGI…LVSS), 300–320 (VFGT…FLFI), and 336–356 (LLNL…LLTT).

It belongs to the complex I subunit 1 family. In terms of assembly, NDH is composed of at least 16 different subunits, 5 of which are encoded in the nucleus.

It localises to the plastid. It is found in the chloroplast thylakoid membrane. It catalyses the reaction a plastoquinone + NADH + (n+1) H(+)(in) = a plastoquinol + NAD(+) + n H(+)(out). It carries out the reaction a plastoquinone + NADPH + (n+1) H(+)(in) = a plastoquinol + NADP(+) + n H(+)(out). Its function is as follows. NDH shuttles electrons from NAD(P)H:plastoquinone, via FMN and iron-sulfur (Fe-S) centers, to quinones in the photosynthetic chain and possibly in a chloroplast respiratory chain. The immediate electron acceptor for the enzyme in this species is believed to be plastoquinone. Couples the redox reaction to proton translocation, and thus conserves the redox energy in a proton gradient. The sequence is that of NAD(P)H-quinone oxidoreductase subunit 1, chloroplastic from Amborella trichopoda.